The chain runs to 158 residues: Methylated-DNA--protein-cysteine methyltransferase (158 aa).

C126 (nucleophile; methyl group acceptor) is an active-site residue.

It belongs to the MGMT family.

It is found in the cytoplasm. It catalyses the reaction a 6-O-methyl-2'-deoxyguanosine in DNA + L-cysteinyl-[protein] = S-methyl-L-cysteinyl-[protein] + a 2'-deoxyguanosine in DNA. The enzyme catalyses a 4-O-methyl-thymidine in DNA + L-cysteinyl-[protein] = a thymidine in DNA + S-methyl-L-cysteinyl-[protein]. Involved in the cellular defense against the biological effects of O6-methylguanine (O6-MeG) and O4-methylthymine (O4-MeT) in DNA. Repairs the methylated nucleobase in DNA by stoichiometrically transferring the methyl group to a cysteine residue in the enzyme. This is a suicide reaction: the enzyme is irreversibly inactivated. In Methanosarcina mazei (strain ATCC BAA-159 / DSM 3647 / Goe1 / Go1 / JCM 11833 / OCM 88) (Methanosarcina frisia), this protein is Methylated-DNA--protein-cysteine methyltransferase.